Here is a 124-residue protein sequence, read N- to C-terminus: Small ribosomal subunit protein bS6 (124 aa).

The segment at 96 to 124 (ETGPSPMMKEVQREEAKKAAAAQPTEAQA) is disordered. Low complexity predominate over residues 114-124 (AAAAQPTEAQA).

This sequence belongs to the bacterial ribosomal protein bS6 family.

Functionally, binds together with bS18 to 16S ribosomal RNA. The polypeptide is Small ribosomal subunit protein bS6 (Burkholderia mallei (strain ATCC 23344)).